Reading from the N-terminus, the 319-residue chain is Probable ABC transporter permease protein MG189 homolog (319 aa).

6 consecutive transmembrane segments (helical) span residues 41-61 (VVLCFFGLMVIFPFYLMLVVA), 98-118 (AIWINSLVTILSIILRLFFTV), 134-154 (LFWFIFLAVLILPESALLIGQ), 169-189 (PAIILGLTMPFVASVFSGFMF), 229-249 (TVSILTAFAAWNSYLWPLLLL), and 282-302 (NLKMAAAILAILPMFIVYFLF). In terms of domain architecture, ABC transmembrane type-1 spans 99-302 (IWINSLVTIL…LPMFIVYFLF (204 aa)).

Belongs to the binding-protein-dependent transport system permease family. MalFG subfamily.

The protein localises to the cell membrane. Functionally, probably part of a binding-protein-dependent transport system. Probably responsible for the translocation of the substrate across the membrane. This is Probable ABC transporter permease protein MG189 homolog from Mycoplasma pneumoniae (strain ATCC 29342 / M129 / Subtype 1) (Mycoplasmoides pneumoniae).